The primary structure comprises 514 residues: MLLRKSIPYIKICRDISASVRNNKEIAQKLPLSVPLPMENNSKSIEKGCPPMGRNSRVTRLPNGLKVCTEDTYGDFVTVGVAIESGCRYENGFPFGISRIVEKLAYNSSESFSSRDEVFAKLEENSGIVDCQSTRDTMMYAASCHRDGVDSVIHVLSDTIWKPIFDEQSLEQAKLTVSYENQDLPNRIEAIEILLTDWIHQAAFQNNTIGYPKFGNNSMDKIRVSDVYGFLSRAHTPQRMVVGGVGVGHDEFVSIISRHFDLNKSTWTTQPTVLPAKIPEIDESRAQYTGGELRLDTDLTKLTIGKPYPLLSHVVLGLEGCSYKDEDFVAFCVLQSLLGGGGAFSAGGPGKGMYARMYTELMNRHHWIYSAIAHNHSYSDSGVFTVTASSPPENINDALILLVHQILQLQQGVEPTELARARTQLRSHLMMNLEVRPVLFEDMVRQVLGHGDRKQPEEYAEKIEKVTNSDIIRVTERLLASKPSLVGYGDIKKLKDLRSLDQAVAKRDLKYLFN.

Residues 1–55 constitute a mitochondrion transit peptide; that stretch reads MLLRKSIPYIKICRDISASVRNNKEIAQKLPLSVPLPMENNSKSIEKGCPPMGRN.

The protein belongs to the peptidase M16 family. In terms of assembly, heterodimer of mppa-1 (alpha) and mppb-1 (beta) subunits, forming the mitochondrial processing protease (MPP) in which mppa-1 is involved in substrate recognition and binding and mppb-1 is the catalytic subunit.

It is found in the mitochondrion matrix. Substrate recognition and binding subunit of the essential mitochondrial processing protease (MPP), which cleaves the mitochondrial sequence off newly imported precursors proteins. The sequence is that of Mitochondrial-processing peptidase subunit alpha from Caenorhabditis elegans.